A 273-amino-acid chain; its full sequence is Vacuolar iron transporter (273 aa).

The Cytoplasmic portion of the chain corresponds to 1 to 47 (MVSKKTIEARKAYYNEDVVLSKEAHDFYHNLDKHGENHNLDKDNLKT). The chain crosses the membrane as a helical span at residues 48–68 (IIFGSLDGIITIFAIVSGCVG). Over 69-75 (AKITPTQ) the chain is Vacuolar. The chain crosses the membrane as a helical span at residues 76–96 (VIIIGIGNLFANAISMGFSEY). Residues 97–181 (TSSTAQRDFM…NEDKNECLKK (85 aa)) are Cytoplasmic-facing. Fe cation-binding residues include glutamate 113, glutamate 116, glutamate 124, glutamate 127, methionine 161, and glutamate 165. Residues 182 to 202 (GIIMFLSFAVFGIIPLSAYVA) traverse the membrane as a helical segment. Topologically, residues 203-212 (YTVFFGYTDY) are vacuolar. A helical transmembrane segment spans residues 213–233 (TTSFLVVFISTLTTLFILGLF). The Cytoplasmic portion of the chain corresponds to 234–246 (KSQFTNQKPITCA). The chain crosses the membrane as a helical span at residues 247 to 267 (LYMVLNGMIAGMVPFLLGVVL). Over 268–273 (KNNISE) the chain is Vacuolar.

Belongs to the CCC1 family. Monomer.

Its subcellular location is the vacuole membrane. The protein resides in the endoplasmic reticulum membrane. The protein localises to the cytoplasmic vesicle membrane. It carries out the reaction Fe(2+)(in) = Fe(2+)(out). Functionally, vacuolar iron transporter involved in the transfer of iron ions from the cytosol to the vacuole for intracellular iron storage. Involved in detoxification of excess iron. The transport mechanism is not well defined and the role of protons is not clear. The chain is Vacuolar iron transporter from Plasmodium falciparum (isolate 3D7).